The sequence spans 156 residues: MAVDPLSSKALKVKRELSENTPHLSDEALMGLSVRELNRNLRGLSAEEVTRLKQRRRTLKNRGYAASCRVKRVCQKEELQKQKSELEREVDKLARENAAMRLELDALRGKCEALQGFARSVAAARGPAALVAPASVITIVKSAPGPAPAADPAPCS.

Residues 51–76 (RLKQRRRTLKNRGYAASCRVKRVCQK) form a basic motif region. The bZIP domain occupies 51–114 (RLKQRRRTLK…DALRGKCEAL (64 aa)). The tract at residues 79–93 (LQKQKSELEREVDKL) is leucine-zipper.

It belongs to the bZIP family. Maf subfamily. Monomer and homo- or heterodimer. Interacts with MIP. Forms high affinity heterodimers with members of the CNC-bZIP family such as NFE2L1/NRF1. Highly expressed in the lung, lower expression in the brain, thymus, liver, spleen, intestine, kidney, heart, muscle, and ovary. Not significantly expressed in hematopoietic cells.

It is found in the nucleus. In terms of biological role, since they lack a putative transactivation domain, the small Mafs behave as transcriptional repressors when they dimerize among themselves. However, they seem to serve as transcriptional activators by dimerizing with other (usually larger) basic-zipper proteins, such as NFE2L1/NRF1, and recruiting them to specific DNA-binding sites. Interacts with the upstream promoter region of the oxytocin receptor gene. May be a transcriptional enhancer in the up-regulation of the oxytocin receptor gene at parturition. This Mus musculus (Mouse) protein is Transcription factor MafF (Maff).